A 166-amino-acid polypeptide reads, in one-letter code: Stress response protein NhaX (166 aa).

It belongs to the universal stress protein A family.

The polypeptide is Stress response protein NhaX (nhaX) (Bacillus subtilis (strain 168)).